We begin with the raw amino-acid sequence, 325 residues long: Lipoyl synthase (325 aa).

Residues 1-33 (MATVIDTLKARGSEDRAARHPEKQNRPDTPVLR) form a disordered region. Positions 8–33 (LKARGSEDRAARHPEKQNRPDTPVLR) are enriched in basic and acidic residues. C64, C69, C75, C90, C94, C97, and S303 together coordinate [4Fe-4S] cluster. The Radical SAM core domain occupies 76–292 (WSQKHATMMI…EAIARAKGFL (217 aa)).

It belongs to the radical SAM superfamily. Lipoyl synthase family. The cofactor is [4Fe-4S] cluster.

It localises to the cytoplasm. The enzyme catalyses [[Fe-S] cluster scaffold protein carrying a second [4Fe-4S](2+) cluster] + N(6)-octanoyl-L-lysyl-[protein] + 2 oxidized [2Fe-2S]-[ferredoxin] + 2 S-adenosyl-L-methionine + 4 H(+) = [[Fe-S] cluster scaffold protein] + N(6)-[(R)-dihydrolipoyl]-L-lysyl-[protein] + 4 Fe(3+) + 2 hydrogen sulfide + 2 5'-deoxyadenosine + 2 L-methionine + 2 reduced [2Fe-2S]-[ferredoxin]. Its pathway is protein modification; protein lipoylation via endogenous pathway; protein N(6)-(lipoyl)lysine from octanoyl-[acyl-carrier-protein]: step 2/2. Its function is as follows. Catalyzes the radical-mediated insertion of two sulfur atoms into the C-6 and C-8 positions of the octanoyl moiety bound to the lipoyl domains of lipoate-dependent enzymes, thereby converting the octanoylated domains into lipoylated derivatives. In Caulobacter vibrioides (strain ATCC 19089 / CIP 103742 / CB 15) (Caulobacter crescentus), this protein is Lipoyl synthase.